Consider the following 147-residue polypeptide: UPF0260 protein Ent638_2368 (147 aa).

This sequence belongs to the UPF0260 family.

The chain is UPF0260 protein Ent638_2368 from Enterobacter sp. (strain 638).